The chain runs to 487 residues: b(0,+)-type amino acid transporter 1 (487 aa).

Basic and acidic residues predominate over residues 1-15 (MGDTGLRKRREDEKS). Positions 1–22 (MGDTGLRKRREDEKSIQSQEPK) are disordered. At 1–31 (MGDTGLRKRREDEKSIQSQEPKTTSLQKELG) the chain is on the cytoplasmic side. At serine 18 the chain carries Phosphoserine. Residues 32 to 55 (LISGISIIVGTIIGSGIFVSPKSV) traverse the membrane as a helical segment. 43–47 (IIGSG) contacts L-arginine. Over 56-62 (LSNTEAV) the chain is Extracellular. The chain crosses the membrane as a helical span at residues 63–84 (GPCLIIWAACGVLATLGALCFA). The Cytoplasmic portion of the chain corresponds to 85–110 (ELGTMITKSGGEYPYLMEAYGPIPAY). A helical membrane pass occupies residues 111-137 (LFSWASLIVIKPTSFAIICLSFSEYVC). The Extracellular segment spans residues 138 to 147 (APFYVGCKPP). 2 helical membrane passes run 148-169 (QIVV…NSLS) and 170-193 (VRLG…IIII). Residues 194–217 (SGLVLLAQGNTKNFDNSFEGAQLS) are Extracellular-facing. A helical membrane pass occupies residues 218-238 (VGAISLAFYNGLWAYDGWNQL). Aspartate 233 lines the L-arginine pocket. The Cytoplasmic segment spans residues 239–251 (NYITEELRNPYRN). Residues 252–274 (LPLAIIIGIPLVTACYILMNVSY) form a helical membrane-spanning segment. The Extracellular segment spans residues 275 to 302 (FTVMTATELLQSQAVAVTFGDRVLYPAS). The helical transmembrane segment at 303–325 (WIVPLFVAFSTIGAANGTCFTAG) threads the bilayer. The Cytoplasmic segment spans residues 326–351 (RLIYVAGREGHMLKVLSYISVRRLTP). A run of 2 helical transmembrane segments spans residues 352–370 (APAI…IPGD) and 371–391 (INSL…LTIL). The Cytoplasmic portion of the chain corresponds to 392–410 (GLIVMRFTRKELERPIKVP). A helical membrane pass occupies residues 411-431 (VVIPVLMTLISVFLVLAPIIS). Residues 432–434 (KPT) lie on the Extracellular side of the membrane. The chain crosses the membrane as a helical span at residues 435–450 (WEYLYCVLFILSGLLF). Residues 451-487 (YFLFVHYKFGWAQKISKPITMHLQMLMEVVPPEEDPE) lie on the Cytoplasmic side of the membrane.

This sequence belongs to the amino acid-polyamine-organocation (APC) superfamily. Disulfide-linked heterodimer composed of the catalytic light chain subunit SLC7A9 and the heavy chain subunit SLC3A1. The heterodimer is the minimal functional unit. Assembles in heterotetramers (dimers of heterodimers) and higher order oligomers; the oligomerization is mediated by SLC3A1 likely to prevent degradation and facilitate heteromer trafficking to the plasma membrane. Interacts with CAV1. In terms of tissue distribution, expressed in the brush border membrane in the kidney (at protein level). Kidney, small intestine, liver and placenta.

Its subcellular location is the apical cell membrane. The protein resides in the cell membrane. It catalyses the reaction L-leucine(out) + L-arginine(in) = L-leucine(in) + L-arginine(out). The enzyme catalyses L-histidine(out) + L-arginine(in) = L-histidine(in) + L-arginine(out). It carries out the reaction L-arginine(in) + L-phenylalanine(out) = L-arginine(out) + L-phenylalanine(in). The catalysed reaction is L-cysteine(out) + L-arginine(in) = L-cysteine(in) + L-arginine(out). It catalyses the reaction L-cystine(out) + L-arginine(in) = L-cystine(in) + L-arginine(out). The enzyme catalyses L-lysine(out) + L-arginine(in) = L-lysine(in) + L-arginine(out). Functionally, associates with SLC3A1 to form a functional transporter complex that mediates the electrogenic exchange between cationic amino acids and neutral amino acids, with a stoichiometry of 1:1. Has system b(0,+)-like activity with high affinity for extracellular cationic amino acids and L-cystine and lower affinity for intracellular neutral amino acids. Substrate exchange is driven by high concentration of intracellular neutral amino acids and the intracellular reduction of L-cystine to L-cysteine. Required for reabsorption of L-cystine and dibasic amino acids across the brush border membrane in renal proximal tubules. In Homo sapiens (Human), this protein is b(0,+)-type amino acid transporter 1.